Reading from the N-terminus, the 925-residue chain is GPI ethanolamine phosphate transferase 1 (925 aa).

Residues 1–6 (MWNKHR) lie on the Cytoplasmic side of the membrane. A helical membrane pass occupies residues 7 to 27 (LAFILVGLLFHLFYLRSIFDI). The Lumenal segment spans residues 28–457 (YFVSPLVHGM…TTYNWRFIRS (430 aa)). 6 N-linked (GlcNAc...) asparagine glycosylation sites follow: Asn90, Asn138, Asn198, Asn286, Asn312, and Asn358. A helical transmembrane segment spans residues 458–478 (IVTLGFIGWITYSFTIFLRLF). At 479–492 (ILEKQYAMKTSPQN) the chain is on the cytoplasmic side. A helical membrane pass occupies residues 493–510 (LASFGALTAALNYVLYYQ). Residues 511-516 (RSPFNY) lie on the Lumenal side of the membrane. A helical transmembrane segment spans residues 517–537 (YMYLLFPLFFWSQILTNSTIL). At 538-547 (HDGIREMFKG) the chain is on the cytoplasmic side. The chain crosses the membrane as a helical span at residues 548-568 (VSMLQRIGICALIVSIYEGIV). Over 569–574 (YGYFDR) the chain is Lumenal. The chain crosses the membrane as a helical span at residues 575-595 (WIFTIIFNLLALYPFFCGIKD). At 596-599 (AKTN) the chain is on the cytoplasmic side. Residues 600–620 (MFWGANSMALSIFTLFDAVKI) form a helical membrane-spanning segment. Glu621 is a topological domain (lumenal). Residues 622 to 642 (SLTQINVSGLLLVASGLYALW) form a helical membrane-spanning segment. Residues 643–653 (RVSKKINSHTK) are Cytoplasmic-facing. Residues 654–674 (IVILLQILLLAMMLAVTNKSV) traverse the membrane as a helical segment. The Lumenal portion of the chain corresponds to 675 to 687 (TSLQQRAGLPTDA). Residues 688-708 (KIAGWVILTLSLSLMPLLHYL) form a helical membrane-spanning segment. Topologically, residues 709-719 (KPSNDYQVRVL) are cytoplasmic. The helical transmembrane segment at 720–740 (VIYLTFAPTFLILTISFESFF) threads the bilayer. Residues 741–775 (YLLFTNYLMLWIEIESKIKAQNIAKNSQNWLQLLR) are Lumenal-facing. Residues 776–796 (ISIIGFFLLQFAFFGTGNVAS) traverse the membrane as a helical segment. At 797–818 (ISSFSLDSVYRLMPVFDPFPMG) the chain is on the cytoplasmic side. Residues 819 to 839 (ALLILKIMIPYILLSTALGIM) traverse the membrane as a helical segment. Topologically, residues 840-848 (NLKLNIKDY) are lumenal. The helical transmembrane segment at 849-869 (TVSSLILSTSDVLSLNFFYLL) threads the bilayer. Topologically, residues 870 to 885 (RTEGSWLDIGVTISNY) are cytoplasmic. The helical transmembrane segment at 886-906 (CLAILSSLFMIVLELFSHFLL) threads the bilayer. Topologically, residues 907 to 925 (KNVRDNGMDIAASKQQKRH) are lumenal.

It belongs to the PIGG/PIGN/PIGO family. PIGN subfamily.

The protein resides in the endoplasmic reticulum membrane. It functions in the pathway glycolipid biosynthesis; glycosylphosphatidylinositol-anchor biosynthesis. Functionally, ethanolamine phosphate transferase involved in glycosylphosphatidylinositol-anchor biosynthesis. Transfers ethanolamine phosphate to the first alpha-1,4-linked mannose of the glycosylphosphatidylinositol precursor of GPI-anchor. The chain is GPI ethanolamine phosphate transferase 1 (MCD4) from Eremothecium gossypii (strain ATCC 10895 / CBS 109.51 / FGSC 9923 / NRRL Y-1056) (Yeast).